The primary structure comprises 174 residues: 16S rRNA aminocarboxypropyltransferase (174 aa).

Residues Thr26, Leu73, Leu97, and Ser116 each coordinate S-adenosyl-L-methionine.

The protein belongs to the TDD superfamily. TSR3 family.

It is found in the cytoplasm. The enzyme catalyses an N(1)-methylpseudouridine in rRNA + S-adenosyl-L-methionine = N(1)-methyl-N(3)-[(3S)-3-amino-3-carboxypropyl]pseudouridine in rRNA + S-methyl-5'-thioadenosine + H(+). In terms of biological role, aminocarboxypropyltransferase that catalyzes the aminocarboxypropyl transfer on pseudouridine corresponding to position 914 in M.jannaschii 16S rRNA. It constitutes the last step in biosynthesis of the hypermodified N1-methyl-N3-(3-amino-3-carboxypropyl) pseudouridine (m1acp3-Psi). This Methanosarcina acetivorans (strain ATCC 35395 / DSM 2834 / JCM 12185 / C2A) protein is 16S rRNA aminocarboxypropyltransferase.